The chain runs to 134 residues: uncharacterized protein (134 aa).

A signal peptide spans 1-16; that stretch reads MAKAVALLLAAIAASA.

This is an uncharacterized protein from Oryza sativa subsp. indica (Rice).